The chain runs to 331 residues: Ketol-acid reductoisomerase (NADP(+)) (331 aa).

Positions 2 to 181 constitute a KARI N-terminal Rossmann domain; the sequence is TKVYYEDAVK…GATRAGVIET (180 aa). NADP(+) is bound by residues 25–28, Arg-48, Ser-52, and 82–85; these read YGSQ and DETQ. The active site involves His-107. NADP(+) is bound at residue Gly-133. Residues 182–327 enclose the KARI C-terminal knotted domain; that stretch reads TFKEETETDL…AELREMMPFV (146 aa). Positions 190, 194, 226, and 230 each coordinate Mg(2+). Ser-251 lines the substrate pocket.

The protein belongs to the ketol-acid reductoisomerase family. The cofactor is Mg(2+).

It catalyses the reaction (2R)-2,3-dihydroxy-3-methylbutanoate + NADP(+) = (2S)-2-acetolactate + NADPH + H(+). It carries out the reaction (2R,3R)-2,3-dihydroxy-3-methylpentanoate + NADP(+) = (S)-2-ethyl-2-hydroxy-3-oxobutanoate + NADPH + H(+). It participates in amino-acid biosynthesis; L-isoleucine biosynthesis; L-isoleucine from 2-oxobutanoate: step 2/4. The protein operates within amino-acid biosynthesis; L-valine biosynthesis; L-valine from pyruvate: step 2/4. Involved in the biosynthesis of branched-chain amino acids (BCAA). Catalyzes an alkyl-migration followed by a ketol-acid reduction of (S)-2-acetolactate (S2AL) to yield (R)-2,3-dihydroxy-isovalerate. In the isomerase reaction, S2AL is rearranged via a Mg-dependent methyl migration to produce 3-hydroxy-3-methyl-2-ketobutyrate (HMKB). In the reductase reaction, this 2-ketoacid undergoes a metal-dependent reduction by NADPH to yield (R)-2,3-dihydroxy-isovalerate. The polypeptide is Ketol-acid reductoisomerase (NADP(+)) (Listeria monocytogenes serovar 1/2a (strain ATCC BAA-679 / EGD-e)).